Consider the following 350-residue polypeptide: Protein pelota homolog (350 aa).

Belongs to the eukaryotic release factor 1 family. Pelota subfamily. In terms of assembly, monomer. Requires a divalent metal cation as cofactor.

Its subcellular location is the cytoplasm. May function in recognizing stalled ribosomes, interact with stem-loop structures in stalled mRNA molecules, and effect endonucleolytic cleavage of the mRNA. May play a role in the release non-functional ribosomes and degradation of damaged mRNAs. Has endoribonuclease activity. In Methanosarcina mazei (strain ATCC BAA-159 / DSM 3647 / Goe1 / Go1 / JCM 11833 / OCM 88) (Methanosarcina frisia), this protein is Protein pelota homolog.